The sequence spans 203 residues: Ras-related protein RABG3b (203 aa).

Residue 15–22 (GDSGVGKT) participates in GTP binding. Residues 37-45 (YKATIGADF) carry the Effector region motif. Residues 63–67 (DTAGQ), 125–128 (NKVD), and 158–159 (SA) each bind GTP. 2 S-geranylgeranyl cysteine lipidation sites follow: C201 and C203. At C203 the chain carries Cysteine methyl ester.

This sequence belongs to the small GTPase superfamily. Rab family. As to quaternary structure, interacts with VPS39. In terms of tissue distribution, expressed in xylem cells of inflorescence stems.

The protein localises to the cell membrane. Its function is as follows. Intracellular vesicle trafficking and protein transport. Functions in autophagy. Involved in xylem and tracheary element differentiation. The protein is Ras-related protein RABG3b (RABG3B) of Arabidopsis thaliana (Mouse-ear cress).